The chain runs to 355 residues: MIKMRKLTREIKIGNKKIGGNNPILVQSMTNTDTHDVEKTVEQIKRLEEEGCDIIRVAVPDEKAAYSIKEIKKHINIPLVADIHFDYRLAIKSIENGADKIRINPGNIGREENIKKVVEAAKERGIPIRIGVNAGSLEKEILNKYGGITPEAVVESALKSVRLLEKLGFYDIVISLKTSNVPLTIEAYKLASSKVDYPLHLGITEAGTLESGTIKSAIGIGTLLYMGIGDTIRVSLTGDPVHEVRVGRQILRALGLLKEGVEVISCPTCGRTKIDVIKLATEVERRTSHIKKPLKVAVMGCVVNGPGEAKEADIGIAGGDREGVIFKKGKIYKIVKEEHLLEELLKEIEKMVKEE.

[4Fe-4S] cluster contacts are provided by C266, C269, C301, and E308.

The protein belongs to the IspG family. [4Fe-4S] cluster serves as cofactor.

The enzyme catalyses (2E)-4-hydroxy-3-methylbut-2-enyl diphosphate + oxidized [flavodoxin] + H2O + 2 H(+) = 2-C-methyl-D-erythritol 2,4-cyclic diphosphate + reduced [flavodoxin]. Its pathway is isoprenoid biosynthesis; isopentenyl diphosphate biosynthesis via DXP pathway; isopentenyl diphosphate from 1-deoxy-D-xylulose 5-phosphate: step 5/6. In terms of biological role, converts 2C-methyl-D-erythritol 2,4-cyclodiphosphate (ME-2,4cPP) into 1-hydroxy-2-methyl-2-(E)-butenyl 4-diphosphate. The polypeptide is 4-hydroxy-3-methylbut-2-en-1-yl diphosphate synthase (flavodoxin) (Caldanaerobacter subterraneus subsp. tengcongensis (strain DSM 15242 / JCM 11007 / NBRC 100824 / MB4) (Thermoanaerobacter tengcongensis)).